A 426-amino-acid polypeptide reads, in one-letter code: Protein arginine methyltransferase NDUFAF7 homolog, mitochondrial (426 aa).

It belongs to the NDUFAF7 family.

The protein resides in the mitochondrion. It catalyses the reaction L-arginyl-[protein] + 2 S-adenosyl-L-methionine = N(omega),N(omega)'-dimethyl-L-arginyl-[protein] + 2 S-adenosyl-L-homocysteine + 2 H(+). Its function is as follows. Arginine methyltransferase involved in the assembly or stability of mitochondrial NADH:ubiquinone oxidoreductase complex (complex I). The protein is Protein arginine methyltransferase NDUFAF7 homolog, mitochondrial of Caenorhabditis elegans.